We begin with the raw amino-acid sequence, 258 residues long: UPF0246 protein PM0066 (258 aa).

Belongs to the UPF0246 family.

The chain is UPF0246 protein PM0066 from Pasteurella multocida (strain Pm70).